Here is a 449-residue protein sequence, read N- to C-terminus: Allantoinase (449 aa).

Residues His-59, His-61, Lys-146, His-182, His-238, and Asp-311 each contribute to the Zn(2+) site. Lys-146 carries the post-translational modification N6-carboxylysine.

This sequence belongs to the metallo-dependent hydrolases superfamily. Allantoinase family. As to quaternary structure, homotetramer. Zn(2+) is required as a cofactor. Carboxylation allows a single lysine to coordinate two zinc ions.

It catalyses the reaction (S)-allantoin + H2O = allantoate + H(+). Its pathway is nitrogen metabolism; (S)-allantoin degradation; allantoate from (S)-allantoin: step 1/1. Its function is as follows. Catalyzes the conversion of allantoin (5-ureidohydantoin) to allantoic acid by hydrolytic cleavage of the five-member hydantoin ring. This Deinococcus geothermalis (strain DSM 11300 / CIP 105573 / AG-3a) protein is Allantoinase.